An 863-amino-acid polypeptide reads, in one-letter code: Envelope glycoprotein gp160 (863 aa).

Positions 1–31 (MRVMGIRMNYQHLWKWGIMLLGILMTCSVAE) are cleaved as a signal peptide. Residues 32 to 691 (DLWVTVYYGV…ITKWLWYIKI (660 aa)) lie on the Extracellular side of the membrane. Cys53 and Cys73 are oxidised to a cystine. Asn87, Asn129, Asn136, Asn142, Asn143, Asn159, Asn163, Asn194, Asn199, Asn209, Asn246, Asn274, Asn288, Asn301, and Asn307 each carry an N-linked (GlcNAc...) asparagine; by host glycan. 5 cysteine pairs are disulfide-bonded: Cys118–Cys217, Cys125–Cys208, Cys130–Cys160, Cys230–Cys259, and Cys240–Cys251. Residues 130-159 (CTNAGGNKTTNGNNTTNQEEQMMEKGEMKN) are V1. Residues 160–208 (CSFNITTVISDKKKQVHALFYRLDVVPIDDDNSANTSNTNYTNYRLINC) are V2. Positions 308-341 (CTRPDNKITRQSTPIGLGQALYTTRIKGDIRQAY) are V3. A disulfide bridge connects residues Cys308 and Cys342. Residues Asn343, Asn350, and Asn365 are each glycosylated (N-linked (GlcNAc...) asparagine; by host). Residues 374–384 (PAGGDPEITTH) are CD4-binding loop. 2 disulfide bridges follow: Cys388–Cys452 and Cys395–Cys425. The tract at residues 395-425 (CNTSRLFNSTWNSSTWNNDTLNSEGTIKLPC) is V4. 8 N-linked (GlcNAc...) asparagine; by host glycosylation sites follow: Asn396, Asn402, Asn406, Asn412, Asn455, Asn468, Asn469, and Asn472. 2 V5 regions span residues 467–478 (VNNSTNETFRPG) and 470–478 (STNETFRPG). The segment at 519–539 (AIGLGAVFLGFLGAAGSTMGA) is fusion peptide. The segment at 581–599 (KQLQARVLAVESYLKDQQL) is immunosuppression. A disulfide bridge connects residues Cys605 and Cys611. Residues Asn618, Asn623, Asn632, and Asn644 are each glycosylated (N-linked (GlcNAc...) asparagine; by host). Residues 640–674 (REIDNYTGVIYSLIENSQIQQEKNEQDLLQLDKWA) are a coiled coil. An MPER; binding to GalCer region spans residues 669-690 (QLDKWASLWNWFSITKWLWYIK). The chain crosses the membrane as a helical span at residues 692–712 (FIMIVGGLIGLRIVFTVLSLV). At 713 to 863 (NRVRQGYSPL…VRQGLERALL (151 aa)) the chain is on the cytoplasmic side. The YXXL motif; contains endocytosis signal motif lies at 719-722 (YSPL). The tract at residues 729-748 (PAPRGPDRPEGIEEEGGEQG) is disordered. Residue Cys771 is the site of S-palmitoyl cysteine; by host attachment. The Di-leucine internalization motif signature appears at 862–863 (LL).

This sequence belongs to the HIV-1 env protein family. In terms of assembly, the mature envelope protein (Env) consists of a homotrimer of non-covalently associated gp120-gp41 heterodimers. The resulting complex protrudes from the virus surface as a spike. There seems to be as few as 10 spikes on the average virion. Interacts with host CD4, CCR5 and CXCR4. Gp120 also interacts with the C-type lectins CD209/DC-SIGN and CLEC4M/DC-SIGNR (collectively referred to as DC-SIGN(R)). Gp120 and gp41 interact with GalCer. Gp120 interacts with host ITGA4/ITGB7 complex; on CD4+ T-cells, this interaction results in rapid activation of integrin ITGAL/LFA-1, which facilitates efficient cell-to-cell spreading of HIV-1. Gp120 interacts with cell-associated heparan sulfate; this interaction increases virus infectivity on permissive cells and may be involved in infection of CD4- cells. The mature envelope protein (Env) consists of a homotrimer of non-covalently associated gp120-gp41 heterodimers. The resulting complex protrudes from the virus surface as a spike. There seems to be as few as 10 spikes on the average virion. Post-translationally, highly glycosylated by host. The high number of glycan on the protein is reffered to as 'glycan shield' because it contributes to hide protein sequence from adaptive immune system. In terms of processing, palmitoylation of the transmembrane protein and of Env polyprotein (prior to its proteolytic cleavage) is essential for their association with host cell membrane lipid rafts. Palmitoylation is therefore required for envelope trafficking to classical lipid rafts, but not for viral replication. Specific enzymatic cleavages in vivo yield mature proteins. Envelope glycoproteins are synthesized as an inactive precursor that is heavily N-glycosylated and processed likely by host cell furin in the Golgi to yield the mature SU and TM proteins. The cleavage site between SU and TM requires the minimal sequence [KR]-X-[KR]-R. About 2 of the 9 disulfide bonds of gp41 are reduced by P4HB/PDI, following binding to CD4 receptor.

Its subcellular location is the virion membrane. The protein resides in the host cell membrane. It is found in the host endosome membrane. Oligomerizes in the host endoplasmic reticulum into predominantly trimers. In a second time, gp160 transits in the host Golgi, where glycosylation is completed. The precursor is then proteolytically cleaved in the trans-Golgi and thereby activated by cellular furin or furin-like proteases to produce gp120 and gp41. Functionally, attaches the virus to the host lymphoid cell by binding to the primary receptor CD4. This interaction induces a structural rearrangement creating a high affinity binding site for a chemokine coreceptor like CXCR4 and/or CCR5. Acts as a ligand for CD209/DC-SIGN and CLEC4M/DC-SIGNR, which are respectively found on dendritic cells (DCs), and on endothelial cells of liver sinusoids and lymph node sinuses. These interactions allow capture of viral particles at mucosal surfaces by these cells and subsequent transmission to permissive cells. HIV subverts the migration properties of dendritic cells to gain access to CD4+ T-cells in lymph nodes. Virus transmission to permissive T-cells occurs either in trans (without DCs infection, through viral capture and transmission), or in cis (following DCs productive infection, through the usual CD4-gp120 interaction), thereby inducing a robust infection. In trans infection, bound virions remain infectious over days and it is proposed that they are not degraded, but protected in non-lysosomal acidic organelles within the DCs close to the cell membrane thus contributing to the viral infectious potential during DCs' migration from the periphery to the lymphoid tissues. On arrival at lymphoid tissues, intact virions recycle back to DCs' cell surface allowing virus transmission to CD4+ T-cells. In terms of biological role, acts as a class I viral fusion protein. Under the current model, the protein has at least 3 conformational states: pre-fusion native state, pre-hairpin intermediate state, and post-fusion hairpin state. During fusion of viral and target intracellular membranes, the coiled coil regions (heptad repeats) assume a trimer-of-hairpins structure, positioning the fusion peptide in close proximity to the C-terminal region of the ectodomain. The formation of this structure appears to drive apposition and subsequent fusion of viral and target cell membranes. Complete fusion occurs in host cell endosomes and is dynamin-dependent, however some lipid transfer might occur at the plasma membrane. The virus undergoes clathrin-dependent internalization long before endosomal fusion, thus minimizing the surface exposure of conserved viral epitopes during fusion and reducing the efficacy of inhibitors targeting these epitopes. Membranes fusion leads to delivery of the nucleocapsid into the cytoplasm. This Human immunodeficiency virus type 1 group M subtype D (isolate Z84) (HIV-1) protein is Envelope glycoprotein gp160.